Here is a 798-residue protein sequence, read N- to C-terminus: Phenylalanine--tRNA ligase beta subunit (798 aa).

The 110-residue stretch at 39–148 (NPIFDGFLVG…EDIPIGKKIN (110 aa)) folds into the tRNA-binding domain. The B5 domain occupies 402 to 477 (SCSNKIKLYH…RIYNYNNIPL (76 aa)). Residues Asp455, Asp461, and Asp465 each contribute to the Mg(2+) site. Residues 704–797 (SKYPTSRRDI…LKKKFQVVLR (94 aa)) form the FDX-ACB domain.

It belongs to the phenylalanyl-tRNA synthetase beta subunit family. Type 1 subfamily. Tetramer of two alpha and two beta subunits. The cofactor is Mg(2+).

It is found in the cytoplasm. The catalysed reaction is tRNA(Phe) + L-phenylalanine + ATP = L-phenylalanyl-tRNA(Phe) + AMP + diphosphate + H(+). This is Phenylalanine--tRNA ligase beta subunit (pheT) from Buchnera aphidicola subsp. Schizaphis graminum (strain Sg).